Here is a 165-residue protein sequence, read N- to C-terminus: 6,7-dimethyl-8-ribityllumazine synthase (165 aa).

5-amino-6-(D-ribitylamino)uracil-binding positions include F22, 56 to 58 (SME), and 80 to 82 (AVI). A (2S)-2-hydroxy-3-oxobutyl phosphate-binding site is contributed by 85–86 (ET). The Proton donor role is filled by H88. A 5-amino-6-(D-ribitylamino)uracil-binding site is contributed by F113. R127 contributes to the (2S)-2-hydroxy-3-oxobutyl phosphate binding site.

It belongs to the DMRL synthase family.

The enzyme catalyses (2S)-2-hydroxy-3-oxobutyl phosphate + 5-amino-6-(D-ribitylamino)uracil = 6,7-dimethyl-8-(1-D-ribityl)lumazine + phosphate + 2 H2O + H(+). It functions in the pathway cofactor biosynthesis; riboflavin biosynthesis; riboflavin from 2-hydroxy-3-oxobutyl phosphate and 5-amino-6-(D-ribitylamino)uracil: step 1/2. In terms of biological role, catalyzes the formation of 6,7-dimethyl-8-ribityllumazine by condensation of 5-amino-6-(D-ribitylamino)uracil with 3,4-dihydroxy-2-butanone 4-phosphate. This is the penultimate step in the biosynthesis of riboflavin. This is 6,7-dimethyl-8-ribityllumazine synthase from Thermotoga sp. (strain RQ2).